We begin with the raw amino-acid sequence, 200 residues long: Recombination protein RecR (200 aa).

The C4-type zinc finger occupies 58 to 75 (CPLCFTLKESKEADCHFC). The 96-residue stretch at 82–177 (QSLCIVASPK…NISRLALGLP (96 aa)) folds into the Toprim domain.

This sequence belongs to the RecR family.

Its function is as follows. May play a role in DNA repair. It seems to be involved in an RecBC-independent recombinational process of DNA repair. It may act with RecF and RecO. In Chlamydia pneumoniae (Chlamydophila pneumoniae), this protein is Recombination protein RecR.